The sequence spans 468 residues: Bifunctional protein HldE (468 aa).

The interval 1-315 (MAKKVEILVV…ELLRSRANAE (315 aa)) is ribokinase. ATP is bound at residue 192–195 (NRKE). Aspartate 260 is a catalytic residue. The interval 340-468 (FTNGCFDILH…IVKRIKDADK (129 aa)) is cytidylyltransferase.

This sequence in the N-terminal section; belongs to the carbohydrate kinase PfkB family. The protein in the C-terminal section; belongs to the cytidylyltransferase family. Homodimer.

The catalysed reaction is D-glycero-beta-D-manno-heptose 7-phosphate + ATP = D-glycero-beta-D-manno-heptose 1,7-bisphosphate + ADP + H(+). It carries out the reaction D-glycero-beta-D-manno-heptose 1-phosphate + ATP + H(+) = ADP-D-glycero-beta-D-manno-heptose + diphosphate. The protein operates within nucleotide-sugar biosynthesis; ADP-L-glycero-beta-D-manno-heptose biosynthesis; ADP-L-glycero-beta-D-manno-heptose from D-glycero-beta-D-manno-heptose 7-phosphate: step 1/4. It participates in nucleotide-sugar biosynthesis; ADP-L-glycero-beta-D-manno-heptose biosynthesis; ADP-L-glycero-beta-D-manno-heptose from D-glycero-beta-D-manno-heptose 7-phosphate: step 3/4. In terms of biological role, catalyzes the phosphorylation of D-glycero-D-manno-heptose 7-phosphate at the C-1 position to selectively form D-glycero-beta-D-manno-heptose-1,7-bisphosphate. Functionally, catalyzes the ADP transfer from ATP to D-glycero-beta-D-manno-heptose 1-phosphate, yielding ADP-D-glycero-beta-D-manno-heptose. This is Bifunctional protein HldE from Campylobacter curvus (strain 525.92).